Reading from the N-terminus, the 579-residue chain is Membrane frizzled-related protein (579 aa).

The Cytoplasmic portion of the chain corresponds to 1–69 (MKDFSDVILC…RPDCRFSWLC (69 aa)). Residues 70 to 90 (VLLLSSLLLLLLGLLVAIILA) form a helical; Signal-anchor for type II membrane protein membrane-spanning segment. Residues 91–579 (QLQAAPPSGA…AADLEACAQP (489 aa)) are Extracellular-facing. The segment at 100 to 143 (ASHSPLPAGGLTTTTTTPTITTSQAAGTPKGQQESGVSPSPQST) is disordered. Over residues 111–121 (TTTTTTPTITT) the composition is skewed to low complexity. Polar residues predominate over residues 122 to 143 (SQAAGTPKGQQESGVSPSPQST). Disulfide bonds link Cys144–Cys170 and Cys197–Cys216. Residues 144 to 253 (CGGLLSGPRG…FGFHAWYQAM (110 aa)) form the CUB 1 domain. Asn227 carries an N-linked (GlcNAc...) asparagine glycan. One can recognise an LDL-receptor class A 1 domain in the interval 259–295 (SCAHDEFRCDQLICLLPDSVCDGFANCADGSDETNCS). Disulfide bonds link Cys260–Cys272, Cys267–Cys285, Cys279–Cys294, Cys301–Cys327, and Cys354–Cys377. Residues 301–414 (CGGNLTGLQG…GGFSATYLAF (114 aa)) enclose the CUB 2 domain. N-linked (GlcNAc...) asparagine glycosylation is present at Asn415. In terms of domain architecture, LDL-receptor class A 2 spans 420–455 (PCGPSELSCQAGGCKGVQWMCDMWRDCTDGSDDNCS). 8 disulfides stabilise this stretch: Cys421–Cys433, Cys428–Cys446, Cys440–Cys454, Cys466–Cys528, Cys474–Cys521, Cys512–Cys549, Cys538–Cys576, and Cys542–Cys564. Residues 461–579 (PPELACEPVQ…AADLEACAQP (119 aa)) form the FZ domain.

In terms of assembly, interacts with C1QTNF5. In terms of tissue distribution, specifically expressed in brain. Strongly expressed in medulla oblongata and to a lower extent in hippocampus and corpus callosum. Expressed in keratinocytes.

It is found in the apical cell membrane. In terms of biological role, may play a role in eye development. In Homo sapiens (Human), this protein is Membrane frizzled-related protein (MFRP).